The following is a 30-amino-acid chain: Dermaseptin-S3 (30 aa).

The protein belongs to the frog skin active peptide (FSAP) family. Dermaseptin subfamily. Monomer and oligomer. Forms aggregates in aqueous environments. In terms of tissue distribution, expressed by the skin glands.

The protein localises to the secreted. Its function is as follows. Potent antimicrobial peptide with activity against bacteria and protozoa. Also has activity against fungi. Probably acts by disturbing membrane functions with its amphipathic structure. Binds to healthy erythrocytes (this binding is receptor independent), but has very weak hemolytic activity. Does not bind to P.falciparum infected erythrocytes, but accumulates within the parasite. Kills the parasite, but has no hemolytic activity on the host cell. In Phyllomedusa sauvagei (Sauvage's leaf frog), this protein is Dermaseptin-S3.